A 97-amino-acid polypeptide reads, in one-letter code: Stefin-1 (97 aa).

A Secondary area of contact motif is present at residues 46–50; sequence QVVAG.

Belongs to the cystatin family.

The protein localises to the cytoplasm. Functionally, this is an intracellular thiol proteinase inhibitor. This Mus musculus (Mouse) protein is Stefin-1 (Stfa1).